The following is a 507-amino-acid chain: ATP synthase subunit alpha, chloroplastic (507 aa).

An ATP-binding site is contributed by 170 to 177; sequence GDRQTGKT.

Belongs to the ATPase alpha/beta chains family. F-type ATPases have 2 components, CF(1) - the catalytic core - and CF(0) - the membrane proton channel. CF(1) has five subunits: alpha(3), beta(3), gamma(1), delta(1), epsilon(1). CF(0) has four main subunits: a, b, b' and c.

It localises to the plastid. Its subcellular location is the chloroplast thylakoid membrane. The enzyme catalyses ATP + H2O + 4 H(+)(in) = ADP + phosphate + 5 H(+)(out). Functionally, produces ATP from ADP in the presence of a proton gradient across the membrane. The alpha chain is a regulatory subunit. This chain is ATP synthase subunit alpha, chloroplastic, found in Spinacia oleracea (Spinach).